We begin with the raw amino-acid sequence, 188 residues long: Nicotinamide-nucleotide adenylyltransferase (188 aa).

Residues 166-188 (SDSLERYAATGESLPESLDDLDD) form a disordered region.

Belongs to the archaeal NMN adenylyltransferase family.

The protein localises to the cytoplasm. It catalyses the reaction beta-nicotinamide D-ribonucleotide + ATP + H(+) = diphosphate + NAD(+). It functions in the pathway cofactor biosynthesis; NAD(+) biosynthesis; NAD(+) from nicotinamide D-ribonucleotide: step 1/1. This is Nicotinamide-nucleotide adenylyltransferase from Haloarcula marismortui (strain ATCC 43049 / DSM 3752 / JCM 8966 / VKM B-1809) (Halobacterium marismortui).